A 274-amino-acid chain; its full sequence is tRNA-cytidine(32) 2-sulfurtransferase (274 aa).

The short motif at 40–45 is the PP-loop motif element; the sequence is SGGKDS. Residues cysteine 115, cysteine 118, and cysteine 206 each coordinate [4Fe-4S] cluster.

Belongs to the TtcA family. Homodimer. Mg(2+) is required as a cofactor. The cofactor is [4Fe-4S] cluster.

Its subcellular location is the cytoplasm. It catalyses the reaction cytidine(32) in tRNA + S-sulfanyl-L-cysteinyl-[cysteine desulfurase] + AH2 + ATP = 2-thiocytidine(32) in tRNA + L-cysteinyl-[cysteine desulfurase] + A + AMP + diphosphate + H(+). It functions in the pathway tRNA modification. Its function is as follows. Catalyzes the ATP-dependent 2-thiolation of cytidine in position 32 of tRNA, to form 2-thiocytidine (s(2)C32). The sulfur atoms are provided by the cysteine/cysteine desulfurase (IscS) system. The sequence is that of tRNA-cytidine(32) 2-sulfurtransferase from Pseudomonas syringae pv. syringae (strain B728a).